We begin with the raw amino-acid sequence, 1090 residues long: DNA damage-binding protein 1 (1090 aa).

Belongs to the DDB1 family. As to quaternary structure, component of the UV-DDB complex, which is composed of DDB1 and DDB2. Expressed in proliferating tissues. Highly expressed in shoot apical meristem (SAM). Expressed in roots, young leaves, flag leaves, and panicles. Not detected in mature leaves.

The protein localises to the nucleus. In terms of biological role, required for DNA repair. Binds to DDB2 to form the UV-damaged DNA-binding protein complex (the UV-DDB complex). The UV-DDB complex may recognize UV-induced DNA damage and recruit proteins of the nucleotide excision repair pathway (the NER pathway) to initiate DNA repair. May function as the substrate recognition module for a DCX (DDB1-CUL4-X-box) E3 ubiquitin-protein ligase complex. The polypeptide is DNA damage-binding protein 1 (Oryza sativa subsp. japonica (Rice)).